The chain runs to 254 residues: UPF0246 protein FTM_0239 (254 aa).

It belongs to the UPF0246 family.

The polypeptide is UPF0246 protein FTM_0239 (Francisella tularensis subsp. mediasiatica (strain FSC147)).